A 182-amino-acid chain; its full sequence is Protein GrpE (182 aa).

A disordered region spans residues 1 to 37 (MSDSSKERKKKFTGMVNKQKSEDQQNNSKQADDLDEL).

The protein belongs to the GrpE family. In terms of assembly, homodimer.

It is found in the cytoplasm. Participates actively in the response to hyperosmotic and heat shock by preventing the aggregation of stress-denatured proteins, in association with DnaK and GrpE. It is the nucleotide exchange factor for DnaK and may function as a thermosensor. Unfolded proteins bind initially to DnaJ; upon interaction with the DnaJ-bound protein, DnaK hydrolyzes its bound ATP, resulting in the formation of a stable complex. GrpE releases ADP from DnaK; ATP binding to DnaK triggers the release of the substrate protein, thus completing the reaction cycle. Several rounds of ATP-dependent interactions between DnaJ, DnaK and GrpE are required for fully efficient folding. The chain is Protein GrpE from Wolbachia sp. subsp. Brugia malayi (strain TRS).